The following is a 164-amino-acid chain: Lipoprotein signal peptidase (164 aa).

A run of 3 helical transmembrane segments spans residues 12 to 32 (WLWLVVVVLIIDLGSKYLILQ), 70 to 90 (WFFAGIAIGISVTLVVMMYRS), and 102 to 122 (ALIIGGALGNLFDRLWHGFVV). Catalysis depends on residues Asp123 and Asp141. A helical transmembrane segment spans residues 137–157 (FNLADTAICVGAALIVLEGFL).

The protein belongs to the peptidase A8 family.

The protein localises to the cell inner membrane. The enzyme catalyses Release of signal peptides from bacterial membrane prolipoproteins. Hydrolyzes -Xaa-Yaa-Zaa-|-(S,diacylglyceryl)Cys-, in which Xaa is hydrophobic (preferably Leu), and Yaa (Ala or Ser) and Zaa (Gly or Ala) have small, neutral side chains.. Its pathway is protein modification; lipoprotein biosynthesis (signal peptide cleavage). In terms of biological role, this protein specifically catalyzes the removal of signal peptides from prolipoproteins. This chain is Lipoprotein signal peptidase, found in Escherichia coli O157:H7.